The primary structure comprises 312 residues: Expansin-A24 (312 aa).

Residues 1 to 27 (MELLKRKLYAKILMMVMVIWIAPMTNG) form the signal peptide. The segment at 31-86 (ASHVPGGRPGAHPSHGAHPAHGAHPSHGAHPSHGAHPSHGAHPSHGALPSHGGQVP) is disordered. Residues 40–77 (GAHPSHGAHPAHGAHPSHGAHPSHGAHPSHGAHPSHGA) are compositionally biased toward low complexity. 6 repeat units span residues 42–47 (HPSHGA), 48–53 (HPAHGA), 54–59 (HPSHGA), 60–65 (HPSHGA), 66–71 (HPSHGA), and 72–77 (HPSHGA). Residues 42 to 77 (HPSHGAHPAHGAHPSHGAHPSHGAHPSHGAHPSHGA) are 6 X 6 AA tandem repeats of H-P-S-H-G-A. Residues 108–218 (QGACGYGDLH…RRVPCAKIGG (111 aa)) enclose the Expansin-like EG45 domain. In terms of domain architecture, Expansin-like CBD spans 228–307 (HFLMILPYNV…DWKCNGQSFD (80 aa)).

It belongs to the expansin family. Expansin A subfamily.

Its subcellular location is the secreted. It is found in the cell wall. The protein localises to the membrane. In terms of biological role, causes loosening and extension of plant cell walls by disrupting non-covalent bonding between cellulose microfibrils and matrix glucans. No enzymatic activity has been found. The polypeptide is Expansin-A24 (EXPA24) (Arabidopsis thaliana (Mouse-ear cress)).